We begin with the raw amino-acid sequence, 479 residues long: MAQHAVYFPDAFLTQMREAMPSTLSFDEFISACQRPLRRSIRINTLKISVADFLALIAPYGWSLTPIPWCHEGFWIERDDEEALPLGSTAEHLSGLFYIQEASSMLPVAALFADDNHPQRVMDMAAAPGSKTTQIAARMGNRGAILANEFSASRVKVLHANISRCGIANTALTHFDGRVFGAALPEMFDAILLDAPCSGEGVVRKDPDALKNWSPESNLDIAATQRELLDSAFHALRPGGTLVYSTCTLNRQENEAVCLWLKETYADAVEFLPLGDLFPDADRALTPEGFLHVFPQIYDCEGFFVARLRKMSSLPAMPAPGYKVGAFPFTPLKGREALHVTQAANAVGLLWDENLHLWQREKEVWLFPAEIESLIGKVRFSRLGIKLAESHNKGYRWQHEATIALACPTHAHAFELSAQEAEEWYRGRDIYPQTPPAADDVLVTFQRQPLGLAKRIGSRIKNSYPRELVRDGKLFTGNS.

Residues 125–131 (AAAPGSK), Glu149, Asp176, and Asp194 each bind S-adenosyl-L-methionine. Cys247 serves as the catalytic Nucleophile.

The protein belongs to the class I-like SAM-binding methyltransferase superfamily. RsmB/NOP family.

The protein resides in the cytoplasm. It carries out the reaction cytidine(1407) in 16S rRNA + S-adenosyl-L-methionine = 5-methylcytidine(1407) in 16S rRNA + S-adenosyl-L-homocysteine + H(+). Functionally, specifically methylates the cytosine at position 1407 (m5C1407) of 16S rRNA. This Salmonella paratyphi B (strain ATCC BAA-1250 / SPB7) protein is Ribosomal RNA small subunit methyltransferase F.